Here is a 414-residue protein sequence, read N- to C-terminus: Enolase (414 aa).

Position 162 (Gln-162) interacts with (2R)-2-phosphoglycerate. Glu-204 (proton donor) is an active-site residue. Mg(2+)-binding residues include Asp-239, Glu-280, and Asp-307. (2R)-2-phosphoglycerate-binding residues include Lys-332, Arg-361, Ser-362, and Lys-383. Lys-332 (proton acceptor) is an active-site residue.

Belongs to the enolase family. Mg(2+) is required as a cofactor.

Its subcellular location is the cytoplasm. It localises to the secreted. The protein localises to the cell surface. It catalyses the reaction (2R)-2-phosphoglycerate = phosphoenolpyruvate + H2O. It participates in carbohydrate degradation; glycolysis; pyruvate from D-glyceraldehyde 3-phosphate: step 4/5. In terms of biological role, catalyzes the reversible conversion of 2-phosphoglycerate (2-PG) into phosphoenolpyruvate (PEP). It is essential for the degradation of carbohydrates via glycolysis. This chain is Enolase, found in Campylobacter jejuni (strain RM1221).